Here is a 669-residue protein sequence, read N- to C-terminus: DNA ligase (669 aa).

NAD(+) contacts are provided by residues 32-36, 81-82, and Glu-111; these read DAEYD and SL. The active-site N6-AMP-lysine intermediate is Lys-113. Residues Arg-134, Glu-171, Lys-290, and Lys-314 each coordinate NAD(+). Zn(2+)-binding residues include Cys-408, Cys-411, Cys-426, and Cys-432. The BRCT domain occupies 591-669; it reads EEALSLKGQT…EAELLAILGS (79 aa).

It belongs to the NAD-dependent DNA ligase family. LigA subfamily. Requires Mg(2+) as cofactor. It depends on Mn(2+) as a cofactor.

It carries out the reaction NAD(+) + (deoxyribonucleotide)n-3'-hydroxyl + 5'-phospho-(deoxyribonucleotide)m = (deoxyribonucleotide)n+m + AMP + beta-nicotinamide D-nucleotide.. Functionally, DNA ligase that catalyzes the formation of phosphodiester linkages between 5'-phosphoryl and 3'-hydroxyl groups in double-stranded DNA using NAD as a coenzyme and as the energy source for the reaction. It is essential for DNA replication and repair of damaged DNA. The sequence is that of DNA ligase from Shewanella loihica (strain ATCC BAA-1088 / PV-4).